Consider the following 121-residue polypeptide: Flagellar protein FliT (121 aa).

Residues 1–50 (MNNAPHLYFAWQQLVEKSQLMLRLATEEQWDELITSEMAYVNAVQEIAHL) form a required for homodimerization region. A fliD binding region spans residues 60-98 (MQEQLRPMLRLILDNESKVKQLLQIRMDELAKLVGQSSV).

This sequence belongs to the FliT family. As to quaternary structure, homodimer. Interacts with FliD and FlhC.

The protein localises to the cytoplasm. It is found in the cytosol. Functionally, dual-function protein that regulates the transcription of class 2 flagellar operons and that also acts as an export chaperone for the filament-capping protein FliD. As a transcriptional regulator, acts as an anti-FlhDC factor; it directly binds FlhC, thus inhibiting the binding of the FlhC/FlhD complex to class 2 promoters, resulting in decreased expression of class 2 flagellar operons. As a chaperone, effects FliD transition to the membrane by preventing its premature polymerization, and by directing it to the export apparatus. This chain is Flagellar protein FliT, found in Escherichia coli (strain 55989 / EAEC).